Here is a 932-residue protein sequence, read N- to C-terminus: Eukaryotic translation initiation factor 3 subunit A (932 aa).

One can recognise a PCI domain in the interval 309-492 (KPATANFVIL…NSISFSSDLF (184 aa)). A phosphoserine mark is found at Ser-374 and Ser-501. A coiled-coil region spans residues 537 to 862 (LRKQQAEAAY…DEEISRKLAE (326 aa)). Basic and acidic residues predominate over residues 793-865 (AEEEAARAAE…ISRKLAEKAA (73 aa)). The disordered stretch occupies residues 793–932 (AEEEAARAAE…PPSRRNQQQQ (140 aa)). 3 positions are modified to phosphoserine: Ser-874, Ser-875, and Ser-877. The span at 877 to 893 (SPGAWRRGGASAGGVSR) shows a compositional bias: low complexity.

It belongs to the eIF-3 subunit A family. Component of the eukaryotic translation initiation factor 3 (eIF-3) complex. The eIF-3 complex appears to include tif32/eif3a, SPAC25G10.08/eif3b, tif33/eif3c, SPBC4C3.07/eif3f, tif35/eif3g and sum1/eif3i. This set of common subunits may also associate exclusively with either moe1/eif3d and int6/eif3e, or with SPAC821.05/eif3h and SPAC1751.03/eif3m. The eIF-3 complex may also include SPAC3A12.13c/eif3j.

The protein resides in the cytoplasm. RNA-binding component of the eukaryotic translation initiation factor 3 (eIF-3) complex, which is involved in protein synthesis of a specialized repertoire of mRNAs and, together with other initiation factors, stimulates binding of mRNA and methionyl-tRNAi to the 40S ribosome. The eIF-3 complex specifically targets and initiates translation of a subset of mRNAs involved in cell proliferation. This is Eukaryotic translation initiation factor 3 subunit A (tif32) from Schizosaccharomyces pombe (strain 972 / ATCC 24843) (Fission yeast).